Consider the following 592-residue polypeptide: Potassium-transporting ATPase potassium-binding subunit (592 aa).

Helical transmembrane passes span 7 to 27 (LQTVLLFVVLLAMVKPLGTFM), 71 to 91 (VLFNLVIFATLFAMLMLQHLL), 136 to 156 (GLTVHNFVSAATGIAVAIAVI), 179 to 199 (LYILVPISLIAALVLVSQGVI), 287 to 307 (LEILLILLIPFSLTYTFGAMV), 314 to 334 (WTLLGVMLLILLASFAVLQGV), 411 to 431 (GLYTMLAFAVIAVFVSGLMIG), 449 to 469 (SVVTVLAAGVMVLILSGIAMI), 473 to 493 (AVAAMANPGAHGLSEVLYAFA), 515 to 535 (ILGALAMIVGRFAPAVAVLAM), and 559 to 579 (FALWLTLVILIVGALTFFPAL).

It belongs to the KdpA family. The system is composed of three essential subunits: KdpA, KdpB and KdpC.

It is found in the cell inner membrane. Functionally, part of the high-affinity ATP-driven potassium transport (or Kdp) system, which catalyzes the hydrolysis of ATP coupled with the electrogenic transport of potassium into the cytoplasm. This subunit binds the periplasmic potassium ions and delivers the ions to the membrane domain of KdpB through an intramembrane tunnel. The protein is Potassium-transporting ATPase potassium-binding subunit of Geobacter sulfurreducens (strain ATCC 51573 / DSM 12127 / PCA).